We begin with the raw amino-acid sequence, 192 residues long: Large ribosomal subunit protein uL5 (192 aa).

The protein belongs to the universal ribosomal protein uL5 family. As to quaternary structure, part of the 50S ribosomal subunit; part of the 5S rRNA/L5/L18/L25 subcomplex. Contacts the 5S rRNA and the P site tRNA. Forms a bridge to the 30S subunit in the 70S ribosome.

Its function is as follows. This is one of the proteins that bind and probably mediate the attachment of the 5S RNA into the large ribosomal subunit, where it forms part of the central protuberance. In the 70S ribosome it contacts protein S13 of the 30S subunit (bridge B1b), connecting the 2 subunits; this bridge is implicated in subunit movement. Contacts the P site tRNA; the 5S rRNA and some of its associated proteins might help stabilize positioning of ribosome-bound tRNAs. The polypeptide is Large ribosomal subunit protein uL5 (Zymomonas mobilis subsp. mobilis (strain ATCC 31821 / ZM4 / CP4)).